A 481-amino-acid polypeptide reads, in one-letter code: Serine--tRNA ligase (481 aa).

284 to 286 (TAE) provides a ligand contact to L-serine. 315-317 (RAE) contributes to the ATP binding site. Glu338 lines the L-serine pocket. 405 to 408 (EISS) provides a ligand contact to ATP. Ser440 lines the L-serine pocket.

The protein belongs to the class-II aminoacyl-tRNA synthetase family. Type-1 seryl-tRNA synthetase subfamily. Homodimer. The tRNA molecule binds across the dimer.

Its subcellular location is the cytoplasm. It catalyses the reaction tRNA(Ser) + L-serine + ATP = L-seryl-tRNA(Ser) + AMP + diphosphate + H(+). It carries out the reaction tRNA(Sec) + L-serine + ATP = L-seryl-tRNA(Sec) + AMP + diphosphate + H(+). Its pathway is aminoacyl-tRNA biosynthesis; selenocysteinyl-tRNA(Sec) biosynthesis; L-seryl-tRNA(Sec) from L-serine and tRNA(Sec): step 1/1. Functionally, catalyzes the attachment of serine to tRNA(Ser). Is also able to aminoacylate tRNA(Sec) with serine, to form the misacylated tRNA L-seryl-tRNA(Sec), which will be further converted into selenocysteinyl-tRNA(Sec). The protein is Serine--tRNA ligase of Rhodopseudomonas palustris (strain BisB18).